Here is a 225-residue protein sequence, read N- to C-terminus: Ribose-5-phosphate isomerase A (225 aa).

Substrate-binding positions include 32-35, 85-88, and 98-101; these read TGST, DGAD, and KGGG. Glu107 serves as the catalytic Proton acceptor. Lys125 lines the substrate pocket.

The protein belongs to the ribose 5-phosphate isomerase family. In terms of assembly, homodimer.

The enzyme catalyses aldehydo-D-ribose 5-phosphate = D-ribulose 5-phosphate. It participates in carbohydrate degradation; pentose phosphate pathway; D-ribose 5-phosphate from D-ribulose 5-phosphate (non-oxidative stage): step 1/1. Catalyzes the reversible conversion of ribose-5-phosphate to ribulose 5-phosphate. The polypeptide is Ribose-5-phosphate isomerase A (Marinobacter nauticus (strain ATCC 700491 / DSM 11845 / VT8) (Marinobacter aquaeolei)).